The following is a 301-amino-acid chain: rRNA methyltransferase 1, mitochondrial (301 aa).

The N-terminal 11 residues, 1–11 (MIRSRVNLARE), are a transit peptide targeting the mitochondrion. The disordered stretch occupies residues 121–141 (YNNKNGQDSPHNDLNEGKSSS).

This sequence belongs to the class IV-like SAM-binding methyltransferase superfamily. RNA methyltransferase TrmH family.

It is found in the mitochondrion. It catalyses the reaction a guanosine in 21S rRNA + S-adenosyl-L-methionine = a 2'-O-methylguanosine in 21S rRNA + S-adenosyl-L-homocysteine + H(+). S-adenosyl-L-methionine-dependent 2'-O-ribose methyltransferase that catalyzes the formation of the 2'-O-methylguanosine corresponding to position 2270 in S.cerevisiae 21S mitochondrial large subunit ribosomal RNA (mtLSU rRNA), a universally conserved modification in the peptidyl transferase domain of the mtLSU rRNA. This chain is rRNA methyltransferase 1, mitochondrial, found in Schizosaccharomyces pombe (strain 972 / ATCC 24843) (Fission yeast).